The following is a 156-amino-acid chain: Ribonuclease pancreatic (156 aa).

An N-terminal signal peptide occupies residues 1–28; it reads MALEKSLALLPLLVLVLLVLGWVQPSLG. Over residues 33–43 the composition is skewed to basic and acidic residues; it reads AQKFQRQHMDS. Positions 33-52 are disordered; it reads AQKFQRQHMDSDGSPSSNPT. Residues lysine 35 and arginine 38 each coordinate substrate. Residue histidine 40 is the Proton acceptor of the active site. 4 disulfides stabilise this stretch: cysteine 54-cysteine 112, cysteine 68-cysteine 123, cysteine 86-cysteine 138, and cysteine 93-cysteine 100. A glycan (N-linked (GlcNAc...) asparagine) is linked at asparagine 62. Residues 69–73, lysine 94, and arginine 113 contribute to the substrate site; that span reads KPVNT. A glycan (N-linked (GlcNAc...) asparagine) is linked at asparagine 116. Histidine 147 (proton donor) is an active-site residue.

This sequence belongs to the pancreatic ribonuclease family. In terms of assembly, monomer. Interacts with and forms tight 1:1 complexes with RNH1. Dimerization of two such complexes may occur. Interaction with RNH1 inhibits this protein.

It is found in the secreted. The enzyme catalyses an [RNA] containing cytidine + H2O = an [RNA]-3'-cytidine-3'-phosphate + a 5'-hydroxy-ribonucleotide-3'-[RNA].. The catalysed reaction is an [RNA] containing uridine + H2O = an [RNA]-3'-uridine-3'-phosphate + a 5'-hydroxy-ribonucleotide-3'-[RNA].. Functionally, endonuclease that catalyzes the cleavage of RNA on the 3' side of pyrimidine nucleotides. Acts on single-stranded and double-stranded RNA. The sequence is that of Ribonuclease pancreatic (RNASE1) from Saguinus oedipus (Cotton-top tamarin).